The primary structure comprises 254 residues: HTH-type transcriptional regulator GlvR (254 aa).

The region spanning 1 to 77 (MQLEELINQH…VFLKWEDQPE (77 aa)) is the HTH rpiR-type domain. The segment at residues 37-56 (IDALAKACSVSRSSILRLAQ) is a DNA-binding region (H-T-H motif). An SIS domain is found at 106–248 (MCQLIDAADR…FRAYVDYKEA (143 aa)).

Functionally, positive regulator of the glv operon expression, which consists of GlvA, GlvR and GlvC. This is HTH-type transcriptional regulator GlvR (glvR) from Bacillus subtilis (strain 168).